Consider the following 261-residue polypeptide: uncharacterized protein (261 aa).

The 116-residue stretch at 7–122 folds into the Response regulatory domain; that stretch reads TAVLADDEPL…RLASCCEKLQ (116 aa). Asp-54 bears the 4-aspartylphosphate mark. One can recognise an HTH LytTR-type domain in the interval 157–261; the sequence is LKASKGEEIH…RALQHLFKVS (105 aa).

This is an uncharacterized protein from Vibrio cholerae serotype O1 (strain ATCC 39315 / El Tor Inaba N16961).